The primary structure comprises 438 residues: Glutaryl-CoA dehydrogenase, mitochondrial (438 aa).

The N-terminal 44 residues, 1–44 (MALRGVSVRLLSRGPGLHVLRTWVSSAAQTEKGGRTQSQLAKSS), are a transit peptide targeting the mitochondrion. Substrate contacts are provided by residues 138-139 (RS) and Ser186. FAD contacts are provided by residues 177–186 (FGLTEPNSGS) and 212–214 (WIT). Lys240 carries the N6-acetyllysine modification. 287 to 294 (FGCLNNAR) lines the substrate pocket. FAD is bound by residues Arg319, Gln330, and 387–391 (DMLGG). Glu414 (proton acceptor) is an active-site residue. Gly415 is a substrate binding site. FAD contacts are provided by residues 416 to 418 (THD) and Phe434.

The protein belongs to the acyl-CoA dehydrogenase family. As to quaternary structure, homotetramer. FAD is required as a cofactor. In terms of tissue distribution, isoform Long and isoform Short are expressed in fibroblasts and liver.

Its subcellular location is the mitochondrion matrix. It carries out the reaction glutaryl-CoA + oxidized [electron-transfer flavoprotein] + 2 H(+) = (2E)-butenoyl-CoA + reduced [electron-transfer flavoprotein] + CO2. Its pathway is amino-acid metabolism; lysine degradation. The protein operates within amino-acid metabolism; tryptophan metabolism. Strongly inhibited by MCPA-CoA, a metabolite of hypoglycin which is present in unripened fruit of the ackee tree. In terms of biological role, catalyzes the oxidative decarboxylation of glutaryl-CoA to crotonyl-CoA and CO(2) in the degradative pathway of L-lysine, L-hydroxylysine, and L-tryptophan metabolism. It uses electron transfer flavoprotein as its electron acceptor. Isoform Short is inactive. This Homo sapiens (Human) protein is Glutaryl-CoA dehydrogenase, mitochondrial (GCDH).